The sequence spans 432 residues: Muscle cell intermediate filament protein OV71 (432 aa).

Residues 1–111 are coil 1B; sequence KLIDELEEYK…RVHDQEISEL (111 aa). An IF rod domain is found at 1-277; it reads KLIDELEEYK…KMLEGEENRA (277 aa). The interval 112 to 128 is linker 12; that stretch reads QAMAARDTTSENREYFK. A coil 2 region spans residues 129–277; the sequence is NELSSAIRDI…KMLEGEENRA (149 aa). Residues 278–432 are tail; the sequence is GLRQLVEQVV…HIQRSSHTIS (155 aa). The region spanning 310-427 is the LTD domain; sequence SRTSFQRSAK…EERASHIQRS (118 aa).

Belongs to the intermediate filament family.

This chain is Muscle cell intermediate filament protein OV71 (OV71), found in Onchocerca volvulus.